Here is a 489-residue protein sequence, read N- to C-terminus: Ketol-acid reductoisomerase (NADP(+)) (489 aa).

The region spanning 17–208 (LGVCEFMEQS…GGHKAGVLRS (192 aa)) is the KARI N-terminal Rossmann domain. NADP(+) contacts are provided by residues 45-48 (CGAQ), Arg-68, Arg-76, Ser-78, and 108-110 (DKQ). His-132 is an active-site residue. Gly-158 contributes to the NADP(+) binding site. KARI C-terminal knotted domains follow at residues 209-344 (SFVA…KTAP) and 345-485 (QEAP…MTAM). Positions 217, 221, 389, and 393 each coordinate Mg(2+). Ser-414 provides a ligand contact to substrate.

This sequence belongs to the ketol-acid reductoisomerase family. Mg(2+) serves as cofactor.

The catalysed reaction is (2R)-2,3-dihydroxy-3-methylbutanoate + NADP(+) = (2S)-2-acetolactate + NADPH + H(+). It carries out the reaction (2R,3R)-2,3-dihydroxy-3-methylpentanoate + NADP(+) = (S)-2-ethyl-2-hydroxy-3-oxobutanoate + NADPH + H(+). Its pathway is amino-acid biosynthesis; L-isoleucine biosynthesis; L-isoleucine from 2-oxobutanoate: step 2/4. The protein operates within amino-acid biosynthesis; L-valine biosynthesis; L-valine from pyruvate: step 2/4. Its function is as follows. Involved in the biosynthesis of branched-chain amino acids (BCAA). Catalyzes an alkyl-migration followed by a ketol-acid reduction of (S)-2-acetolactate (S2AL) to yield (R)-2,3-dihydroxy-isovalerate. In the isomerase reaction, S2AL is rearranged via a Mg-dependent methyl migration to produce 3-hydroxy-3-methyl-2-ketobutyrate (HMKB). In the reductase reaction, this 2-ketoacid undergoes a metal-dependent reduction by NADPH to yield (R)-2,3-dihydroxy-isovalerate. The sequence is that of Ketol-acid reductoisomerase (NADP(+)) from Flavobacterium johnsoniae (strain ATCC 17061 / DSM 2064 / JCM 8514 / BCRC 14874 / CCUG 350202 / NBRC 14942 / NCIMB 11054 / UW101) (Cytophaga johnsonae).